A 95-amino-acid chain; its full sequence is uncharacterized protein (95 aa).

Positions 1-24 (MKKLATLTALAGALTMAVATAAQA) form a signal peptide, or 21. Positions 55–89 (EGKCGADKAKSAEGKCGEGKCGADKAKSAEGKCGE) are enriched in basic and acidic residues. A disordered region spans residues 55–95 (EGKCGADKAKSAEGKCGEGKCGADKAKSAEGKCGEGKCGSK).

This is an uncharacterized protein from Haemophilus influenzae (strain ATCC 51907 / DSM 11121 / KW20 / Rd).